We begin with the raw amino-acid sequence, 425 residues long: Serine--tRNA ligase (425 aa).

An L-serine-binding site is contributed by 232-234 (TSE). Residues 263 to 265 (RRE) and V279 each bind ATP. Residue E286 coordinates L-serine. Position 350–353 (350–353 (EAVS)) interacts with ATP. T387 lines the L-serine pocket.

It belongs to the class-II aminoacyl-tRNA synthetase family. Type-1 seryl-tRNA synthetase subfamily. As to quaternary structure, homodimer. The tRNA molecule binds across the dimer.

The protein resides in the cytoplasm. The catalysed reaction is tRNA(Ser) + L-serine + ATP = L-seryl-tRNA(Ser) + AMP + diphosphate + H(+). The enzyme catalyses tRNA(Sec) + L-serine + ATP = L-seryl-tRNA(Sec) + AMP + diphosphate + H(+). It participates in aminoacyl-tRNA biosynthesis; selenocysteinyl-tRNA(Sec) biosynthesis; L-seryl-tRNA(Sec) from L-serine and tRNA(Sec): step 1/1. Its function is as follows. Catalyzes the attachment of serine to tRNA(Ser). Is also able to aminoacylate tRNA(Sec) with serine, to form the misacylated tRNA L-seryl-tRNA(Sec), which will be further converted into selenocysteinyl-tRNA(Sec). The protein is Serine--tRNA ligase of Methanoculleus marisnigri (strain ATCC 35101 / DSM 1498 / JR1).